We begin with the raw amino-acid sequence, 563 residues long: Probable terpene synthase 4 (563 aa).

Positions 316, 320, and 469 each coordinate Mg(2+). The DDXXD motif motif lies at 316–320; sequence DDIFD.

The protein belongs to the terpene synthase family. It depends on Mg(2+) as a cofactor.

In terms of biological role, probable sesquiterpene synthase. The sequence is that of Probable terpene synthase 4 (TPS4) from Ricinus communis (Castor bean).